Here is a 49-residue protein sequence, read N- to C-terminus: Large ribosomal subunit protein bL33 (49 aa).

The protein belongs to the bacterial ribosomal protein bL33 family.

The chain is Large ribosomal subunit protein bL33 from Lactiplantibacillus plantarum (strain ATCC BAA-793 / NCIMB 8826 / WCFS1) (Lactobacillus plantarum).